The sequence spans 352 residues: Nicotinate-nucleotide--dimethylbenzimidazole phosphoribosyltransferase (352 aa).

The active-site Proton acceptor is glutamate 318.

Belongs to the CobT family.

The enzyme catalyses 5,6-dimethylbenzimidazole + nicotinate beta-D-ribonucleotide = alpha-ribazole 5'-phosphate + nicotinate + H(+). The protein operates within nucleoside biosynthesis; alpha-ribazole biosynthesis; alpha-ribazole from 5,6-dimethylbenzimidazole: step 1/2. In terms of biological role, catalyzes the synthesis of alpha-ribazole-5'-phosphate from nicotinate mononucleotide (NAMN) and 5,6-dimethylbenzimidazole (DMB). The chain is Nicotinate-nucleotide--dimethylbenzimidazole phosphoribosyltransferase from Dehalococcoides mccartyi (strain ATCC BAA-2100 / JCM 16839 / KCTC 5957 / BAV1).